The chain runs to 342 residues: Anthranilate phosphoribosyltransferase (342 aa).

5-phospho-alpha-D-ribose 1-diphosphate contacts are provided by residues G79, 82 to 83 (GD), T87, 89 to 92 (NIST), 107 to 115 (KHCNQRISS), and S119. G79 contributes to the anthranilate binding site. S91 serves as a coordination point for Mg(2+). N110 contacts anthranilate. Residue R165 coordinates anthranilate. Mg(2+)-binding residues include D223 and E224.

This sequence belongs to the anthranilate phosphoribosyltransferase family. As to quaternary structure, homodimer. It depends on Mg(2+) as a cofactor.

It carries out the reaction N-(5-phospho-beta-D-ribosyl)anthranilate + diphosphate = 5-phospho-alpha-D-ribose 1-diphosphate + anthranilate. The protein operates within amino-acid biosynthesis; L-tryptophan biosynthesis; L-tryptophan from chorismate: step 2/5. Functionally, catalyzes the transfer of the phosphoribosyl group of 5-phosphorylribose-1-pyrophosphate (PRPP) to anthranilate to yield N-(5'-phosphoribosyl)-anthranilate (PRA). This is Anthranilate phosphoribosyltransferase from Buchnera aphidicola subsp. Acyrthosiphon pisum (strain Tuc7).